Here is a 626-residue protein sequence, read N- to C-terminus: DEAD-box ATP-dependent RNA helicase 16 (626 aa).

Residues 1-48 (MGKTKLKPVEDVNSEVVDEVEKAEEVEEQRNDREQEEEQKEEEAPKSF) form a disordered region. A coiled-coil region spans residues 9–47 (VEDVNSEVVDEVEKAEEVEEQRNDREQEEEQKEEEAPKS). Positions 12-27 (VNSEVVDEVEKAEEVE) are enriched in acidic residues. Positions 46–74 (KSFEELGLDSRLIRALTKKGIEKPTLIQQ) match the Q motif motif. One can recognise a Helicase ATP-binding domain in the interval 77–259 (IPYILEGKDV…KLILHNPIVL (183 aa)). 90–97 (AKTGSGKT) contacts ATP. Positions 207–210 (DEAD) match the DEAD box motif. The Helicase C-terminal domain maps to 293–477 (ALLKLEVVQK…PFPLLTENAV (185 aa)). A coiled-coil region spans residues 356–385 (IATDDNSQTKKQKEEAKGEANKENKKNNKR). Positions 363 to 381 (QTKKQKEEAKGEANKENKK) are enriched in basic and acidic residues. 2 disordered regions span residues 363–388 (QTKKQKEEAKGEANKENKKNNKRSKP) and 568–626 (AMGN…QKTV).

The protein belongs to the DEAD box helicase family. DDX56/DBP9 subfamily.

It carries out the reaction ATP + H2O = ADP + phosphate + H(+). This chain is DEAD-box ATP-dependent RNA helicase 16 (RH16), found in Arabidopsis thaliana (Mouse-ear cress).